Consider the following 305-residue polypeptide: Tyrosine recombinase XerC (305 aa).

Residues Thr-4 to Glu-95 form the Core-binding (CB) domain. Positions Leu-116 to Thr-298 constitute a Tyr recombinase domain. Residues Arg-159, Lys-182, His-250, Arg-253, and His-276 contribute to the active site. Residue Tyr-285 is the O-(3'-phospho-DNA)-tyrosine intermediate of the active site.

It belongs to the 'phage' integrase family. XerC subfamily. As to quaternary structure, forms a cyclic heterotetrameric complex composed of two molecules of XerC and two molecules of XerD.

It localises to the cytoplasm. Functionally, site-specific tyrosine recombinase, which acts by catalyzing the cutting and rejoining of the recombining DNA molecules. The XerC-XerD complex is essential to convert dimers of the bacterial chromosome into monomers to permit their segregation at cell division. It also contributes to the segregational stability of plasmids. The sequence is that of Tyrosine recombinase XerC from Rickettsia canadensis (strain McKiel).